A 207-amino-acid chain; its full sequence is N-(5'-phosphoribosyl)anthranilate isomerase (207 aa).

The protein belongs to the TrpF family.

The enzyme catalyses N-(5-phospho-beta-D-ribosyl)anthranilate = 1-(2-carboxyphenylamino)-1-deoxy-D-ribulose 5-phosphate. It participates in amino-acid biosynthesis; L-tryptophan biosynthesis; L-tryptophan from chorismate: step 3/5. The chain is N-(5'-phosphoribosyl)anthranilate isomerase from Legionella pneumophila (strain Corby).